We begin with the raw amino-acid sequence, 243 residues long: Ion-translocating oxidoreductase complex subunit E (243 aa).

6 consecutive transmembrane segments (helical) span residues 40-60 (LGMG…ISAL), 72-92 (AFIL…NAWL), 94-114 (DLHK…AILG), 129-149 (ALDG…VGAI), 152-172 (ILGS…HFAF), and 183-203 (GFLI…LFAL).

It belongs to the NqrDE/RnfAE family. As to quaternary structure, the complex is composed of six subunits: RnfA, RnfB, RnfC, RnfD, RnfE and RnfG.

Its subcellular location is the cellular chromatophore membrane. Functionally, part of a membrane-bound complex that couples electron transfer with translocation of ions across the membrane. Required for nitrogen fixation. Involved in electron transfer to nitrogenase. The polypeptide is Ion-translocating oxidoreductase complex subunit E (Rhodobacter capsulatus (Rhodopseudomonas capsulata)).